We begin with the raw amino-acid sequence, 572 residues long: MGFRINTNVAALNAKANADLNSKSLDASLSRLSSGLRINSAADDASGMAIADSLRSQANTLGQAISNGNDALGILQTADKAMDEQLKILDTIKTKATQAAQDGQSLKTRTMLQADINRLMEELDNIANTTSFNGKQLLSGNFINQEFQIGASSNQTVKATIGATQSSKIGLTRFETGGRISTSGEVQFTLKNYNGIDDFQFQKVVISTSVGTGLGALADEINKNADKTGVRATFTVETRGIAAVRAGATSDTFAINGVKIGKVDYKDGDANGALVAAINSVKDTTGVEASIDANGQLLLTSREGRGIKIDGNIGGGAFINADMKENYGRLSLVKNDGKDILISGSNLSSAGFGATQFISQASVSLRESKGQIDANIADAMGFGSANKGVVLGGYSSVSAYMSSAGSGFSSGSGYSVGSGKNYSTGFANAIAISAASQLSTVYNVSAGSGFSSGSTLSQFATMKTTAFGVKDETAGVTTLKGAMAVMDIAETAITNLDQIRADIGSVQNQVTSTINNITVTQVNVKAAESQIRDVDFAAESANYSKANILAQSGSYAMAQANSVQQNVLRLLQ.

Belongs to the bacterial flagellin family. In terms of assembly, heteromer of FlaA and FlaB. Interacts with FliW.

The protein resides in the secreted. It localises to the bacterial flagellum. Flagellin is the subunit protein which polymerizes to form the filaments of bacterial flagella. FlaA binds to flagellar assembly factor FliW protein, preventing FliW from binding to CsrA, so that CsrA can then bind flaA mRNA and represses its translation. The protein is Flagellin A (flaA) of Campylobacter jejuni subsp. jejuni serotype O:2 (strain ATCC 700819 / NCTC 11168).